Consider the following 286-residue polypeptide: 33 kDa chaperonin (286 aa).

2 cysteine pairs are disulfide-bonded: C225–C227 and C258–C261.

The protein belongs to the HSP33 family. Under oxidizing conditions two disulfide bonds are formed involving the reactive cysteines. Under reducing conditions zinc is bound to the reactive cysteines and the protein is inactive.

It is found in the cytoplasm. Redox regulated molecular chaperone. Protects both thermally unfolding and oxidatively damaged proteins from irreversible aggregation. Plays an important role in the bacterial defense system toward oxidative stress. The polypeptide is 33 kDa chaperonin (Shewanella sp. (strain MR-4)).